The sequence spans 441 residues: Deoxyguanosinetriphosphate triphosphohydrolase-like protein (441 aa).

A disordered region spans residues 1-27 (MTSSVWQERRHGEDKQRRNDHRSPYQR). The segment covering 7–27 (QERRHGEDKQRRNDHRSPYQR) has biased composition (basic and acidic residues). Residues 59–252 (RLTHSLEVSQ…MELADDIAYA (194 aa)) enclose the HD domain.

The protein belongs to the dGTPase family. Type 2 subfamily.

This chain is Deoxyguanosinetriphosphate triphosphohydrolase-like protein, found in Shewanella oneidensis (strain ATCC 700550 / JCM 31522 / CIP 106686 / LMG 19005 / NCIMB 14063 / MR-1).